The chain runs to 352 residues: Anthranilate phosphoribosyltransferase (352 aa).

5-phospho-alpha-D-ribose 1-diphosphate is bound by residues glycine 94, 97–98 (GS), serine 102, 104–107 (NIST), 122–130 (KHGNRAVSS), and serine 134. Glycine 94 contributes to the anthranilate binding site. Serine 106 contacts Mg(2+). Position 125 (asparagine 125) interacts with anthranilate. Arginine 180 contacts anthranilate. Mg(2+) contacts are provided by aspartate 239 and glutamate 240.

It belongs to the anthranilate phosphoribosyltransferase family. In terms of assembly, homodimer. Mg(2+) is required as a cofactor.

The catalysed reaction is N-(5-phospho-beta-D-ribosyl)anthranilate + diphosphate = 5-phospho-alpha-D-ribose 1-diphosphate + anthranilate. It functions in the pathway amino-acid biosynthesis; L-tryptophan biosynthesis; L-tryptophan from chorismate: step 2/5. In terms of biological role, catalyzes the transfer of the phosphoribosyl group of 5-phosphorylribose-1-pyrophosphate (PRPP) to anthranilate to yield N-(5'-phosphoribosyl)-anthranilate (PRA). This chain is Anthranilate phosphoribosyltransferase, found in Geobacter sp. (strain M21).